The following is a 151-amino-acid chain: Hemoglobin-2 (151 aa).

Position 2 is an N-acetylthreonine (T2). Positions 3-148 (TLTNPQKAAI…ICKTLGDYMK (146 aa)) constitute a Globin domain. H97 provides a ligand contact to heme b.

Belongs to the globin family. Homotetramer.

The protein resides in the cytoplasm. This Phacoides pectinatus (Thick lucine) protein is Hemoglobin-2.